We begin with the raw amino-acid sequence, 963 residues long: Putative RNA Helicase B962L (963 aa).

Residues 43–229 form the Helicase ATP-binding domain; the sequence is IPTSLADRVL…FGIGKENIIL (187 aa). 56-63 is a binding site for ATP; that stretch reads SRTGSGKS. The DEAH box motif lies at 167–170; sequence DEAH. Residues 253–459 form the Helicase C-terminal domain; it reads ACETALTIHK…TIKKNKEGVF (207 aa). A helical transmembrane segment spans residues 521–541; the sequence is GYFWQAAISDIAIILAVVSVV.

Belongs to the DEAD box helicase family. DEAH subfamily.

The protein resides in the host membrane. Its subcellular location is the virion. It carries out the reaction ATP + H2O = ADP + phosphate + H(+). The chain is Putative RNA Helicase B962L from African swine fever virus (isolate Tick/Malawi/Lil 20-1/1983) (ASFV).